A 189-amino-acid chain; its full sequence is Glycerol-3-phosphate acyltransferase (189 aa).

5 consecutive transmembrane segments (helical) span residues 1 to 21, 50 to 70, 81 to 101, 111 to 131, and 151 to 171; these read MFWS…AIVL, KLAI…VLLA, AWVG…RFQG, MLMA…VLTF, and LLAW…LMIV.

The protein belongs to the PlsY family. Probably interacts with PlsX.

It is found in the cell inner membrane. It carries out the reaction an acyl phosphate + sn-glycerol 3-phosphate = a 1-acyl-sn-glycero-3-phosphate + phosphate. It functions in the pathway lipid metabolism; phospholipid metabolism. Catalyzes the transfer of an acyl group from acyl-phosphate (acyl-PO(4)) to glycerol-3-phosphate (G3P) to form lysophosphatidic acid (LPA). This enzyme utilizes acyl-phosphate as fatty acyl donor, but not acyl-CoA or acyl-ACP. The protein is Glycerol-3-phosphate acyltransferase of Pseudomonas entomophila (strain L48).